A 78-amino-acid chain; its full sequence is Probable [Fe-S]-dependent transcriptional repressor (78 aa).

Iron-sulfur cluster contacts are provided by C56, C61, C64, and C70.

Belongs to the FeoC family.

May function as a transcriptional regulator that controls feoABC expression. This chain is Probable [Fe-S]-dependent transcriptional repressor, found in Salmonella heidelberg (strain SL476).